Reading from the N-terminus, the 204-residue chain is Movement protein TGB2 (204 aa).

At 1–11 (MKTTVGSRPNK) the chain is on the cytoplasmic side. The helical transmembrane segment at 12–32 (YWPIVAGIGVVGLFAYLIFSN) threads the bilayer. Residues 33-72 (QKHSTESGDNIHKFANGGSYRDGSKSISYNRNHPFAYGNA) lie on the Lumenal side of the membrane. Residues 73–93 (SSPGMLLPAMLTIIGIISYLW) traverse the membrane as a helical segment. The Cytoplasmic portion of the chain corresponds to 94 to 204 (RTRDSVLGDS…RFNQCFEYSS (111 aa)).

This sequence belongs to the virgaviridae/benyvirus TGB2 movement protein family. In terms of assembly, interacts with movement protein TGB3. TGB1-TGB3-TGB2 complex formation is enhanced by ATP hydrolysis.

It localises to the host cell junction. The protein localises to the host plasmodesma. It is found in the host endoplasmic reticulum membrane. The protein resides in the host cytoplasm. Its subcellular location is the host cytoskeleton. Participates in the transport of viral genome to neighboring plant cells directly through plasmodesmata, without any budding. TGBp2 and TGBp3 are necessary for intracellular delivery of TGBp1-containing vRNPs to plasmodesmata. Can gate plasmodesmata and increase their size exclusion limit. To a lesser extent than TGB3, induces host actin cytoskeleton network thickening, which probably plays a major role in virus cell-to-cell movement. The protein is Movement protein TGB2 of Barley stripe mosaic virus (BSMV).